Reading from the N-terminus, the 288-residue chain is Phenazine biosynthesis-like domain-containing protein (288 aa).

Glu46 is an active-site residue.

The protein belongs to the PhzF family. Interacts with UNRIP/MAWD.

The chain is Phenazine biosynthesis-like domain-containing protein (PBLD) from Homo sapiens (Human).